Consider the following 306-residue polypeptide: Golgi to ER traffic protein 2 (306 aa).

Positions 1–18 are enriched in basic and acidic residues; sequence MSEISDAEKRRILREKRQ. Positions 1–100 are disordered; it reads MSEISDAEKR…PPGSAEQQNG (100 aa). Residues 1–172 lie on the Cytoplasmic side of the membrane; that stretch reads MSEISDAEKR…VEAHNIAVNK (172 aa). Positions 34-57 are enriched in polar residues; sequence TGQTENSFLSTESPLDSRESTYPA. The segment covering 68–77 has biased composition (basic and acidic residues); that stretch reads DSTKQMDELL. A compositionally biased stretch (low complexity) spans 78–90; that stretch reads AKATSKTTSKASS. Over residues 91-100 the composition is skewed to polar residues; it reads PPGSAEQQNG. Residues 173–193 form a helical membrane-spanning segment; the sequence is LKSYTILVKWLFFLLPYLYYI. Topologically, residues 194–214 are lumenal; sequence THSARDPFQHNAVNYVLDRSN. Residues 215–234 form a helical membrane-spanning segment; sequence FFTVFTTFEIVALSVYYQLL. Topologically, residues 235 to 281 are cytoplasmic; that stretch reads MSAEKSHNVNTLDNNSKILKLVSMVPPGLVPIPNLRGKVAQALQYWD. Residues 282–302 traverse the membrane as a helical segment; that stretch reads VVSMYLTDLCFAIVLAGLFQY. Residues 303 to 306 lie on the Lumenal side of the membrane; that stretch reads YHSM.

This sequence belongs to the GET2 family. In terms of assembly, component of the Golgi to ER traffic (GET) complex, which is composed of GET1, GET2 and GET3. Within the complex, GET1 and GET2 form a heterotetramer which is stabilized by phosphatidylinositol binding and which binds to the GET3 homodimer.

It is found in the endoplasmic reticulum membrane. The protein localises to the golgi apparatus membrane. In terms of biological role, required for the post-translational delivery of tail-anchored (TA) proteins to the endoplasmic reticulum. Together with GET1, acts as a membrane receptor for soluble GET3, which recognizes and selectively binds the transmembrane domain of TA proteins in the cytosol. The GET complex cooperates with the HDEL receptor ERD2 to mediate the ATP-dependent retrieval of resident ER proteins that contain a C-terminal H-D-E-L retention signal from the Golgi to the ER. This Lachancea thermotolerans (strain ATCC 56472 / CBS 6340 / NRRL Y-8284) (Yeast) protein is Golgi to ER traffic protein 2.